Here is a 207-residue protein sequence, read N- to C-terminus: Large ribosomal subunit protein uL4 (207 aa).

The tract at residues Arg45–Ile78 is disordered. Over residues Gly60 to Gly71 the composition is skewed to basic residues.

Belongs to the universal ribosomal protein uL4 family. Part of the 50S ribosomal subunit.

Functionally, one of the primary rRNA binding proteins, this protein initially binds near the 5'-end of the 23S rRNA. It is important during the early stages of 50S assembly. It makes multiple contacts with different domains of the 23S rRNA in the assembled 50S subunit and ribosome. In terms of biological role, forms part of the polypeptide exit tunnel. This chain is Large ribosomal subunit protein uL4, found in Pediococcus pentosaceus (strain ATCC 25745 / CCUG 21536 / LMG 10740 / 183-1w).